The sequence spans 461 residues: CBL-interacting protein kinase 1 (461 aa).

Residues Y19–F274 enclose the Protein kinase domain. ATP is bound by residues L25–V33 and K48. The Proton acceptor role is filled by D142. Positions D160–E189 are activation loop. The NAF domain maps to E308 to E332. The PPI stretch occupies residues Q338–V367.

Belongs to the protein kinase superfamily. CAMK Ser/Thr protein kinase family. SNF1 subfamily. Mn(2+) is required as a cofactor.

The catalysed reaction is L-seryl-[protein] + ATP = O-phospho-L-seryl-[protein] + ADP + H(+). It carries out the reaction L-threonyl-[protein] + ATP = O-phospho-L-threonyl-[protein] + ADP + H(+). CIPK serine-threonine protein kinases interact with CBL proteins. Binding of a CBL protein to the regulatory NAF domain of CIPK protein lead to the activation of the kinase in a calcium-dependent manner. This chain is CBL-interacting protein kinase 1 (CIPK1), found in Oryza sativa subsp. japonica (Rice).